The sequence spans 331 residues: Hyaluronidase A (331 aa).

2 cysteine pairs are disulfide-bonded: cysteine 19-cysteine 308 and cysteine 185-cysteine 197. Asparagine 79 and asparagine 99 each carry an N-linked (GlcNAc...) asparagine glycan. Glutamate 109 functions as the Proton donor in the catalytic mechanism. Asparagine 127 carries N-linked (GlcNAc...) asparagine glycosylation. The N-linked (GlcNAc...) asparagine glycan is linked to asparagine 325.

It belongs to the glycosyl hydrolase 56 family. In terms of tissue distribution, expressed by the venom gland.

The protein localises to the secreted. It catalyses the reaction Random hydrolysis of (1-&gt;4)-linkages between N-acetyl-beta-D-glucosamine and D-glucuronate residues in hyaluronate.. Its function is as follows. Hydrolyzes high molecular weight hyaluronic acid to produce small oligosaccharides. This is Hyaluronidase A from Vespula vulgaris (Yellow jacket).